The chain runs to 385 residues: Endoglucanase 1 (385 aa).

The signal sequence occupies residues 1–17 (MKLVFSALASLLSGASA). N-linked (GlcNAc...) asparagine glycosylation is found at N93 and N140. Residue E176 is the Proton donor of the active site. N-linked (GlcNAc...) asparagine glycosylation is found at N200 and N237. E284 acts as the Nucleophile in catalysis. N-linked (GlcNAc...) asparagine glycosylation is found at N289 and N331.

The protein belongs to the glycosyl hydrolase 5 (cellulase A) family.

It catalyses the reaction Endohydrolysis of (1-&gt;4)-beta-D-glucosidic linkages in cellulose, lichenin and cereal beta-D-glucans.. It participates in glycan metabolism; cellulose degradation. Its function is as follows. Active towards carboxymethyl cellulose. The polypeptide is Endoglucanase 1 (eg 1) (Robillarda sp. (strain Y-20)).